The primary structure comprises 129 residues: Transcription antitermination protein NusB (129 aa).

It belongs to the NusB family.

Its function is as follows. Involved in transcription antitermination. Required for transcription of ribosomal RNA (rRNA) genes. Binds specifically to the boxA antiterminator sequence of the ribosomal RNA (rrn) operons. The polypeptide is Transcription antitermination protein NusB (Bacillus licheniformis (strain ATCC 14580 / DSM 13 / JCM 2505 / CCUG 7422 / NBRC 12200 / NCIMB 9375 / NCTC 10341 / NRRL NRS-1264 / Gibson 46)).